The primary structure comprises 246 residues: NLP effector protein Pc118548 (246 aa).

The N-terminal stretch at 1 to 19 (MNFRAFLLAAIAGIATINA) is a signal peptide. The Hepta-peptide GHRHDWE motif signature appears at 122-128 (GHRHYWE). N-linked (GlcNAc...) asparagine glycosylation occurs at Asn141.

This sequence belongs to the Necrosis inducing protein (NPP1) family.

The protein resides in the secreted. Secreted effector that contributes strongly to virulence during infection by P.capsici. Induces cell death in the Solanaceae, including Nicotiana benthamiana and hot pepper. The chain is NLP effector protein Pc118548 from Phytophthora capsici.